A 267-amino-acid chain; its full sequence is Translation initiation factor 2 subunit alpha (267 aa).

Residues 12–83 (GEIVMATVER…KRKYANLSLR (72 aa)) enclose the S1 motif domain.

It belongs to the eIF-2-alpha family. Heterotrimer composed of an alpha, a beta and a gamma chain.

Functionally, eIF-2 functions in the early steps of protein synthesis by forming a ternary complex with GTP and initiator tRNA. The protein is Translation initiation factor 2 subunit alpha of Methanopyrus kandleri (strain AV19 / DSM 6324 / JCM 9639 / NBRC 100938).